A 308-amino-acid polypeptide reads, in one-letter code: MKKKHVAVLMGGFSSERPVSLSSGNSCADALEAEGYRVSRVDVSRDVSRVLSELKPDVAFNALHGPFGEDGTVQGVLEYLGIPYTHSGVLASALAMDKDLAKTVAKSAGIPVASSRVMNRFEIGDKHPMEPPYVVKPVAEGSSFGVVIVREGQSHPPQVLGSAEWGYGERVMVERYIPGRELTCAVMGDRVLGVCEIVPVGHSFYDYDSKYAPGGSRHVCPAEISPNIYQKIERLALKAHQAIGCRGVSRSDFRYDDRLPGEEGIVWLEINTQPGMTPTSLVPDIAAQAGIGFGALLSWMVEDASCPR.

An ATP-grasp domain is found at 102-302 (KTVAKSAGIP…FGALLSWMVE (201 aa)). 128–183 (PMEPPYVVKPVAEGSSFGVVIVREGQSHPPQVLGSAEWGYGERVMVERYIPGRELT) contributes to the ATP binding site. Mg(2+) contacts are provided by Asp252, Glu269, and Asn271.

This sequence belongs to the D-alanine--D-alanine ligase family. The cofactor is Mg(2+). Mn(2+) is required as a cofactor.

Its subcellular location is the cytoplasm. It carries out the reaction 2 D-alanine + ATP = D-alanyl-D-alanine + ADP + phosphate + H(+). Its pathway is cell wall biogenesis; peptidoglycan biosynthesis. In terms of biological role, cell wall formation. This chain is D-alanine--D-alanine ligase, found in Chelativorans sp. (strain BNC1).